The sequence spans 519 residues: uncharacterized protein (519 aa).

A compositionally biased stretch (basic residues) spans Ile477–Gln486. The disordered stretch occupies residues Ile477–His519.

This is an uncharacterized protein from Mycobacterium tuberculosis (strain ATCC 25618 / H37Rv).